Here is a 258-residue protein sequence, read N- to C-terminus: Indole-3-glycerol phosphate synthase (258 aa).

The protein belongs to the TrpC family.

The enzyme catalyses 1-(2-carboxyphenylamino)-1-deoxy-D-ribulose 5-phosphate + H(+) = (1S,2R)-1-C-(indol-3-yl)glycerol 3-phosphate + CO2 + H2O. The protein operates within amino-acid biosynthesis; L-tryptophan biosynthesis; L-tryptophan from chorismate: step 4/5. This is Indole-3-glycerol phosphate synthase from Geobacillus thermodenitrificans (strain NG80-2).